The following is a 181-amino-acid chain: Protein Syd (181 aa).

It belongs to the Syd family.

It localises to the cell inner membrane. Interacts with the SecY protein in vivo. May bind preferentially to an uncomplexed state of SecY, thus functioning either as a chelating agent for excess SecY in the cell or as a regulatory factor that negatively controls the translocase function. In Escherichia fergusonii (strain ATCC 35469 / DSM 13698 / CCUG 18766 / IAM 14443 / JCM 21226 / LMG 7866 / NBRC 102419 / NCTC 12128 / CDC 0568-73), this protein is Protein Syd.